The sequence spans 698 residues: SHC SH2 domain-binding protein 1 homolog B (698 aa).

PbH1 repeat units follow at residues 480-502 (CAEL…EIYP), 503-524 (GSKC…LIKD), and 532-554 (IPKI…VLVK).

It is found in the midbody. The protein localises to the cytoplasm. Its subcellular location is the cytoskeleton. The protein resides in the spindle. Functionally, may play a role in signaling pathways governing cellular proliferation. The protein is SHC SH2 domain-binding protein 1 homolog B (shcbp1-b) of Xenopus laevis (African clawed frog).